Reading from the N-terminus, the 270-residue chain is Phosphatidylglycerol--prolipoprotein diacylglyceryl transferase (270 aa).

Transmembrane regions (helical) follow at residues 19-39, 56-76, 92-112, and 116-136; these read FPVYWYGIIIGTGVLLGLWLA, LVLIAVPIAILFARMYYVIFE, QGGLAIHGGLIGAVITGILFA, and GVSFWKLADIAAPSILLGQAI. An a 1,2-diacyl-sn-glycero-3-phospho-(1'-sn-glycerol)-binding site is contributed by R138. A run of 3 helical transmembrane segments spans residues 178–198, 206–226, and 236–256; these read HPTFLYESLWNFAGVILLLAL, GELFFTYLIWYSIGRFFVEGL, and LRIAQVMSIGLVVISIIFIIV.

Belongs to the Lgt family.

It localises to the cell membrane. It catalyses the reaction L-cysteinyl-[prolipoprotein] + a 1,2-diacyl-sn-glycero-3-phospho-(1'-sn-glycerol) = an S-1,2-diacyl-sn-glyceryl-L-cysteinyl-[prolipoprotein] + sn-glycerol 1-phosphate + H(+). Its pathway is protein modification; lipoprotein biosynthesis (diacylglyceryl transfer). Its function is as follows. Catalyzes the transfer of the diacylglyceryl group from phosphatidylglycerol to the sulfhydryl group of the N-terminal cysteine of a prolipoprotein, the first step in the formation of mature lipoproteins. In Bacillus cereus (strain ZK / E33L), this protein is Phosphatidylglycerol--prolipoprotein diacylglyceryl transferase.